A 511-amino-acid chain; its full sequence is Glucans biosynthesis protein G (511 aa).

The signal sequence occupies residues 1 to 22 (MMKMRWLSAAVMLTLYTSSSWA).

The protein belongs to the OpgD/OpgG family.

The protein resides in the periplasm. It functions in the pathway glycan metabolism; osmoregulated periplasmic glucan (OPG) biosynthesis. Involved in the biosynthesis of osmoregulated periplasmic glucans (OPGs). This chain is Glucans biosynthesis protein G, found in Shigella dysenteriae serotype 1 (strain Sd197).